The chain runs to 338 residues: Anthranilate phosphoribosyltransferase (338 aa).

Residues Gly81, 84–85 (GD), Thr89, 91–94 (NIST), 109–117 (KHGNRALSS), and Ala121 contribute to the 5-phospho-alpha-D-ribose 1-diphosphate site. Gly81 serves as a coordination point for anthranilate. Ser93 contacts Mg(2+). Residue Asn112 participates in anthranilate binding. Residue Arg167 participates in anthranilate binding. Residues Asp225 and Glu226 each contribute to the Mg(2+) site.

This sequence belongs to the anthranilate phosphoribosyltransferase family. In terms of assembly, homodimer. Requires Mg(2+) as cofactor.

It carries out the reaction N-(5-phospho-beta-D-ribosyl)anthranilate + diphosphate = 5-phospho-alpha-D-ribose 1-diphosphate + anthranilate. It functions in the pathway amino-acid biosynthesis; L-tryptophan biosynthesis; L-tryptophan from chorismate: step 2/5. Catalyzes the transfer of the phosphoribosyl group of 5-phosphorylribose-1-pyrophosphate (PRPP) to anthranilate to yield N-(5'-phosphoribosyl)-anthranilate (PRA). In Rhizobium johnstonii (strain DSM 114642 / LMG 32736 / 3841) (Rhizobium leguminosarum bv. viciae), this protein is Anthranilate phosphoribosyltransferase.